The primary structure comprises 38 residues: Large ribosomal subunit protein bL36 (38 aa).

It belongs to the bacterial ribosomal protein bL36 family.

This is Large ribosomal subunit protein bL36 from Acinetobacter baylyi (strain ATCC 33305 / BD413 / ADP1).